An 892-amino-acid chain; its full sequence is Smad protein daf-3 (892 aa).

2 disordered regions span residues 1-43 (MGDH…GLED) and 135-161 (PYLD…FDTK). Polar residues predominate over residues 15-26 (IPPQFNYSQPGT). One can recognise an MH1 domain in the interval 198–347 (KIVEYLMYYR…YEIVIGTMIV (150 aa)). Residues 505–552 (YPDFHHPFNQQPHQPPQLSQNHTSQQGSHQPGHQGQVPNDPPISRPVL) form a disordered region. Residues 528–540 (SQQGSHQPGHQGQ) show a composition bias toward low complexity. Positions 657–880 (WGTIVYYEKN…TNCFEPLGME (224 aa)) constitute an MH2 domain.

This sequence belongs to the dwarfin/SMAD family. As to quaternary structure, interacts with R-SMADs daf-8 and daf-14. Interacts with daf-14 in a daf-8 dependent manner. May interact with daf-5.

It is found in the cytoplasm. The protein resides in the nucleus. It localises to the chromosome. Functionally, transcriptional regulator and common SMAD (co-SMAD), required to regulate entry into a developmentally arrested larval state known as dauer, in response to harsh environmental conditions. Probable component of transcriptional regulatory complex with SMAD protein daf-5. Acts antagonistically to SMAD signaling downstream of TGF-beta-like daf-7 signaling. Binds to the 5'-GTCTG-3' motif found in regulatory regions and may modulate the expression of genes involved in TGF-beta-like daf-7 and Notch lag-2 signaling. May regulate gene expression outside the dauer pathway. The protein is Smad protein daf-3 of Caenorhabditis elegans.